A 1055-amino-acid polypeptide reads, in one-letter code: Activated CDC42 kinase 1 (1055 aa).

The segment at 1-110 (MQPEEGTGWL…PSPTPGSLPG (110 aa)) is SAM-like domain. Residues 91-110 (SQHSQSTFRKPSPTPGSLPG) are disordered. Residue Thr113 is modified to Phosphothreonine. The Protein kinase domain maps to 126–385 (LRLLEKLGDG…PTFVALRDFL (260 aa)). ATP contacts are provided by residues 132-140 (LGDGSFGVV) and Lys158. Asp252 serves as the catalytic Proton acceptor. Position 284 is a phosphotyrosine; by SRC and autocatalysis (Tyr284). In terms of domain architecture, SH3 spans 388-448 (AQPTDMRALQ…PRNVVTSVAG (61 aa)). One can recognise a CRIB domain in the interval 454–466 (ISQPLQNSFIHTG). Residues 505-548 (RPTQHLGRVKREPPPRPPQPAIFTQKTTYDPVSEDPDPLSSDFK) form a disordered region. Phosphotyrosine is present on residues Pro518 and Tyr533. A required for interaction with SRC region spans residues 638–667 (DWDARPLPPPPAYDDVAQDEDDFEVCSINS). The tract at residues 647 to 650 (PPAY) is required for interaction with NEDD4. The tract at residues 737–855 (TGQLTPSPTP…QVIQAPGPRA (119 aa)) is disordered. Residues 748–891 (GDDKPQVPPR…PYLERYQRFL (144 aa)) form an EBD domain region. Pro residues-rich tracts occupy residues 753 to 764 (QVPPRVPIPPRP) and 787 to 798 (PASPPRVPPREP). Residues 817-827 (PLPHRLSSSPG) are compositionally biased toward low complexity. Tyr842 is modified (phosphotyrosine). Omega-N-methylarginine is present on Arg854. A phosphotyrosine mark is found at Tyr874 and Tyr887. Ser896 is subject to Phosphoserine. The interval 896-952 (SPEEPAALPVPPLLPPPSTPAPAAPTATVRPMPQAAPDPKANFSTNNSNPGARPPSL) is disordered. A compositionally biased stretch (pro residues) spans 903-918 (LPVPPLLPPPSTPAPA). Positions 973–1013 (PADKVQMLQAMVHGVTTEECQAALQSHSWSVQRAAQYLKVE) constitute a UBA domain.

This sequence belongs to the protein kinase superfamily. Tyr protein kinase family. Homodimer. Interacts with CSPG4 (activated). Interacts with MERTK (activated); stimulates autophosphorylation. May interact (phosphorylated) with HSP90AB1; maintains kinase activity. Interacts with NPHP1. Interacts with SNX9 (via SH3 domain). Interacts with SRC (via SH2 and SH3 domain). Part of a collagen stimulated complex involved in cell migration composed of CDC42, CRK, TNK2 and BCAR1/p130cas. Interacts with BCAR1/p130cas via SH3 domains. Forms complexes with GRB2 and numerous receptor tyrosine kinases (RTK) including LTK, AXL or PDGFRL, in which GRB2 promotes RTK recruitment by TNK2. Interacts with CDC42. Interacts with EGFR, and this interaction is dependent on EGF stimulation and kinase activity of EGFR. Interacts (via kinase domain) with AKT1. Interacts with NEDD4 (via WW3 domain). NEDD4L and EGF promote association with NEDD4. Requires Mg(2+) as cofactor. Autophosphorylation regulates kinase activity. Phosphorylation on Tyr-533 is required for interaction with SRC and is observed during association with clathrin-coated pits. In terms of processing, polyubiquitinated by NEDD4 and NEDD4L. Degradation can be induced by EGF and is lysosome-dependent. As to expression, ubiquitously present in all tissues tested. Highly expressed in the adult central nervous system (CNS); hippocampus, neocortex, and cerebellum, both at dendritic spines and presynaptic axon terminals. Levels are strongly increased during enhanced neural activity.

It is found in the cell membrane. The protein localises to the nucleus. The protein resides in the endosome. It localises to the cell junction. Its subcellular location is the adherens junction. It is found in the cytoplasmic vesicle membrane. The protein localises to the cytoplasmic vesicle. The protein resides in the clathrin-coated vesicle. It localises to the membrane. Its subcellular location is the clathrin-coated pit. It is found in the cytoplasm. The protein localises to the cytosol. It catalyses the reaction L-tyrosyl-[protein] + ATP = O-phospho-L-tyrosyl-[protein] + ADP + H(+). The catalysed reaction is L-seryl-[protein] + ATP = O-phospho-L-seryl-[protein] + ADP + H(+). It carries out the reaction L-threonyl-[protein] + ATP = O-phospho-L-threonyl-[protein] + ADP + H(+). Functionally, non-receptor tyrosine-protein and serine/threonine-protein kinase that is implicated in cell spreading and migration, cell survival, cell growth and proliferation. Transduces extracellular signals to cytosolic and nuclear effectors. Phosphorylates AKT1, AR, MCF2, WASL and WWOX. Implicated in trafficking and clathrin-mediated endocytosis through binding to epidermal growth factor receptor (EGFR) and clathrin. Binds to both poly- and mono-ubiquitin and regulates ligand-induced degradation of EGFR, thereby contributing to the accumulation of EGFR at the limiting membrane of early endosomes. Downstream effector of CDC42 which mediates CDC42-dependent cell migration via phosphorylation of BCAR1. May be involved both in adult synaptic function and plasticity and in brain development. Activates AKT1 by phosphorylating it on 'Tyr-176'. Phosphorylates AR on 'Tyr-267' and 'Tyr-363' thereby promoting its recruitment to androgen-responsive enhancers (AREs). Phosphorylates WWOX on 'Tyr-287'. Phosphorylates MCF2, thereby enhancing its activity as a guanine nucleotide exchange factor (GEF) toward Rho family proteins. Contributes to the control of AXL receptor levels. Confers metastatic properties on cancer cells and promotes tumor growth by negatively regulating tumor suppressor such as WWOX and positively regulating pro-survival factors such as AKT1 and AR. This chain is Activated CDC42 kinase 1 (Tnk2), found in Mus musculus (Mouse).